Reading from the N-terminus, the 157-residue chain is S-ribosylhomocysteine lyase (157 aa).

Fe cation-binding residues include His-54, His-58, and Cys-126.

It belongs to the LuxS family. In terms of assembly, homodimer. Fe cation serves as cofactor.

It catalyses the reaction S-(5-deoxy-D-ribos-5-yl)-L-homocysteine = (S)-4,5-dihydroxypentane-2,3-dione + L-homocysteine. Functionally, involved in the synthesis of autoinducer 2 (AI-2) which is secreted by bacteria and is used to communicate both the cell density and the metabolic potential of the environment. The regulation of gene expression in response to changes in cell density is called quorum sensing. Catalyzes the transformation of S-ribosylhomocysteine (RHC) to homocysteine (HC) and 4,5-dihydroxy-2,3-pentadione (DPD). The protein is S-ribosylhomocysteine lyase of Bacillus licheniformis (strain ATCC 14580 / DSM 13 / JCM 2505 / CCUG 7422 / NBRC 12200 / NCIMB 9375 / NCTC 10341 / NRRL NRS-1264 / Gibson 46).